We begin with the raw amino-acid sequence, 203 residues long: MSRTARIERVTKETKVLVEIDLDGTGKADIETGVGFYDHMLHQIARHGGFDLTVHTVGDLHIDAHHTMEDAALALGAAVDRALGDRAGIRRYGAATVPMDEVLVRAAVDLSGRPYVVHDEPPLAPYIGPVYPTSMTRHIWESFGQSARITLHVDVLRAARPGGHPDAHHVVEAQFKAVSRALREATSLDPRFTGVVPSTKGTL.

The protein belongs to the imidazoleglycerol-phosphate dehydratase family.

The protein resides in the cytoplasm. The catalysed reaction is D-erythro-1-(imidazol-4-yl)glycerol 3-phosphate = 3-(imidazol-4-yl)-2-oxopropyl phosphate + H2O. The protein operates within amino-acid biosynthesis; L-histidine biosynthesis; L-histidine from 5-phospho-alpha-D-ribose 1-diphosphate: step 6/9. This Salinispora arenicola (strain CNS-205) protein is Imidazoleglycerol-phosphate dehydratase.